The sequence spans 138 residues: MDFYLDIVSVEKRIFSGLVDRIQVSGSEGEMGIYPGHTQLLSIIKPGVIYIFHKNKTEECLYISGGILEVQPSVVSILADVAIRGIDLDRKRVVKAKKQAEEYFKKETTNVKKDDVLLEISKAIAKLRVLEIMDKFKK.

It belongs to the ATPase epsilon chain family. F-type ATPases have 2 components, CF(1) - the catalytic core - and CF(0) - the membrane proton channel. CF(1) has five subunits: alpha(3), beta(3), gamma(1), delta(1), epsilon(1). CF(0) has three main subunits: a, b and c.

It localises to the cell membrane. Its function is as follows. Produces ATP from ADP in the presence of a proton gradient across the membrane. This is ATP synthase epsilon chain (atpC) from Buchnera aphidicola subsp. Schizaphis graminum (strain Sg).